Reading from the N-terminus, the 464-residue chain is tRNA modification GTPase MnmE (464 aa).

(6S)-5-formyl-5,6,7,8-tetrahydrofolate is bound by residues arginine 25, glutamate 87, and lysine 130. Positions 226 to 386 (GLSVVLAGQP…LRAELLRIAG (161 aa)) constitute a TrmE-type G domain. Position 236 (asparagine 236) interacts with K(+). Residues 236-241 (NVGKSS), 255-261 (TPIAGTT), and 280-283 (DTAG) contribute to the GTP site. Serine 240 contributes to the Mg(2+) binding site. The K(+) site is built by threonine 255, isoleucine 257, and threonine 260. Residue threonine 261 coordinates Mg(2+). A (6S)-5-formyl-5,6,7,8-tetrahydrofolate-binding site is contributed by lysine 464.

The protein belongs to the TRAFAC class TrmE-Era-EngA-EngB-Septin-like GTPase superfamily. TrmE GTPase family. In terms of assembly, homodimer. Heterotetramer of two MnmE and two MnmG subunits. K(+) is required as a cofactor.

It is found in the cytoplasm. Its function is as follows. Exhibits a very high intrinsic GTPase hydrolysis rate. Involved in the addition of a carboxymethylaminomethyl (cmnm) group at the wobble position (U34) of certain tRNAs, forming tRNA-cmnm(5)s(2)U34. This chain is tRNA modification GTPase MnmE, found in Burkholderia lata (strain ATCC 17760 / DSM 23089 / LMG 22485 / NCIMB 9086 / R18194 / 383).